The sequence spans 357 residues: MERVVVGLSGGVDSSVAAALLHRQGYAVEGLTLWLMKGKGQCCSEGMVDAAGICEQMGVPYHVVDSRDRFQEAIVDYVVQGYEAGITPLPCSQCNRAVKFGPMLDYAKTELKADAIATGHYARLRQNPETGRTELLRAVDRNKDQTYFLYDLPQSVLQSVKFPLGELTKPETRQIAAELGLRTAEKPESQDLCLAEVHGSMRAFLDRYIESREGEIVDQSGRVLGKHTGIHHYTIGQRKGLGIAHSEPLYVIAIDPIQNRVVVGDRHSAAQSECTVSRVNWVSIAQPDAPIQAAVQVRYRSAPVPCTVIPLAGDRARILFADPQFSITPGQAAVWYDGDRLLGGGLIDRVERTTEPV.

ATP is bound by residues 7-14 (GLSGGVDS) and Leu33. Cys94 serves as the catalytic Nucleophile. Cys94 and Cys193 are oxidised to a cystine. Gly119 contributes to the ATP binding site. The interval 143–145 (KDQ) is interaction with tRNA. Residue Cys193 is the Cysteine persulfide intermediate of the active site. The interaction with tRNA stretch occupies residues 298–299 (RY).

This sequence belongs to the MnmA/TRMU family.

It localises to the cytoplasm. The catalysed reaction is S-sulfanyl-L-cysteinyl-[protein] + uridine(34) in tRNA + AH2 + ATP = 2-thiouridine(34) in tRNA + L-cysteinyl-[protein] + A + AMP + diphosphate + H(+). In terms of biological role, catalyzes the 2-thiolation of uridine at the wobble position (U34) of tRNA, leading to the formation of s(2)U34. This Synechococcus sp. (strain ATCC 27144 / PCC 6301 / SAUG 1402/1) (Anacystis nidulans) protein is tRNA-specific 2-thiouridylase MnmA.